A 333-amino-acid chain; its full sequence is UDP-N-acetylglucosamine 4,6-dehydratase (inverting) (333 aa).

Residues 19-22 (TGSF), 43-48 (SRDELK), 67-68 (DV), alanine 87, lysine 91, and 129-130 (LS) contribute to the NADP(+) site. Lysine 91 lines the substrate pocket. Residue lysine 133 is part of the active site. 2 residues coordinate NADP(+): tyrosine 141 and lysine 145. Asparagine 173 provides a ligand contact to substrate. Residue 174–178 (VVGSR) participates in NADP(+) binding. Positions 181, 199, 258, and 261 each coordinate substrate.

It belongs to the polysaccharide synthase family. Homohexamer. The cofactor is NADP(+).

The catalysed reaction is UDP-N-acetyl-alpha-D-glucosamine = UDP-2-acetamido-2,6-dideoxy-beta-L-arabino-hex-4-ulose + H2O. Its function is as follows. Catalyzes the first step in the biosynthesis of pseudaminic acid, a sialic-acid-like sugar that is used to modify flagellin. Has both C6 dehydratase and C5 epimerase activities that result in the production of both UDP-2-acetamido-2,6-dideoxy-beta-L-arabino-4-hexulose and UDP-2-acetamido-2,6-dideoxy-alpha-D-xylo-4-hexulose. The polypeptide is UDP-N-acetylglucosamine 4,6-dehydratase (inverting) (pseB) (Helicobacter pylori (strain ATCC 700392 / 26695) (Campylobacter pylori)).